The following is a 315-amino-acid chain: DNA-directed RNA polymerase subunit alpha (315 aa).

An alpha N-terminal domain (alpha-NTD) region spans residues 1 to 227 (MTQFQIECVE…NLFNPFKKIN (227 aa)). The tract at residues 239 to 315 (EDKISQIPIE…PKRKTNKKEN (77 aa)) is alpha C-terminal domain (alpha-CTD).

Belongs to the RNA polymerase alpha chain family. As to quaternary structure, in plastids the minimal PEP RNA polymerase catalytic core is composed of four subunits: alpha, beta, beta', and beta''. When a (nuclear-encoded) sigma factor is associated with the core the holoenzyme is formed, which can initiate transcription.

The protein localises to the plastid. Its subcellular location is the cyanelle. It carries out the reaction RNA(n) + a ribonucleoside 5'-triphosphate = RNA(n+1) + diphosphate. In terms of biological role, DNA-dependent RNA polymerase catalyzes the transcription of DNA into RNA using the four ribonucleoside triphosphates as substrates. This Cyanophora paradoxa protein is DNA-directed RNA polymerase subunit alpha.